A 325-amino-acid chain; its full sequence is Elongation factor P--(R)-beta-lysine ligase (325 aa).

Residue 76 to 78 (SPE) coordinates substrate. Residues 100–102 (RNE) and Asn109 contribute to the ATP site. Substrate is bound at residue Tyr118. 244-245 (EL) provides a ligand contact to ATP. Glu251 is a binding site for substrate. Position 300 (Gly300) interacts with ATP.

Belongs to the class-II aminoacyl-tRNA synthetase family. EpmA subfamily. Homodimer.

The catalysed reaction is D-beta-lysine + L-lysyl-[protein] + ATP = N(6)-((3R)-3,6-diaminohexanoyl)-L-lysyl-[protein] + AMP + diphosphate + H(+). Functionally, with EpmB is involved in the beta-lysylation step of the post-translational modification of translation elongation factor P (EF-P). Catalyzes the ATP-dependent activation of (R)-beta-lysine produced by EpmB, forming a lysyl-adenylate, from which the beta-lysyl moiety is then transferred to the epsilon-amino group of a conserved specific lysine residue in EF-P. The protein is Elongation factor P--(R)-beta-lysine ligase of Yersinia enterocolitica serotype O:8 / biotype 1B (strain NCTC 13174 / 8081).